Here is a 234-residue protein sequence, read N- to C-terminus: Phosphoribosylaminoimidazole-succinocarboxamide synthase (234 aa).

This sequence belongs to the SAICAR synthetase family.

It carries out the reaction 5-amino-1-(5-phospho-D-ribosyl)imidazole-4-carboxylate + L-aspartate + ATP = (2S)-2-[5-amino-1-(5-phospho-beta-D-ribosyl)imidazole-4-carboxamido]succinate + ADP + phosphate + 2 H(+). The protein operates within purine metabolism; IMP biosynthesis via de novo pathway; 5-amino-1-(5-phospho-D-ribosyl)imidazole-4-carboxamide from 5-amino-1-(5-phospho-D-ribosyl)imidazole-4-carboxylate: step 1/2. This chain is Phosphoribosylaminoimidazole-succinocarboxamide synthase, found in Exiguobacterium sp. (strain ATCC BAA-1283 / AT1b).